The sequence spans 82 residues: Mitotic-spindle organizing protein 1 (82 aa).

Position 2 is an N-acetylalanine (Ala2).

The protein belongs to the MOZART1 family. Associates with the gamma-tubulin ring complex (gTuRC) consisting of TUBGCP2, TUBGCP3, TUBGCP4, TUBGCP5 and TUBGCP6 and gamma-tubulin TUBG1 or TUBG2; within the complex, interacts with TUBGCP3 and TUBGCP6 to form a luminal bridge with actin that stabilizes the initial structure during complex assembly. Interacts with TUBG1.

Its subcellular location is the cytoplasm. It is found in the cytoskeleton. The protein localises to the microtubule organizing center. The protein resides in the centrosome. It localises to the spindle. Its function is as follows. Required for the recruitment and the assembly of the gamma-tubulin ring complex (gTuRC) at the centrosome. The gTuRC regulates the minus-end nucleation of alpha-beta tubulin heterodimers that grow into microtubule protafilaments, a critical step in centrosome duplication and spindle formation. The sequence is that of Mitotic-spindle organizing protein 1 (MZT1) from Homo sapiens (Human).